A 90-amino-acid polypeptide reads, in one-letter code: MAFVRSLLGAKKILSRSTAAGSAAPKGFLAVYVGESQKKRYLVPLSYLSQPSFQALLSKSEEEFGFAHPMGGLTIPCPEDTFINVTSRLQ.

It belongs to the ARG7 family. Interacts with and inhibits PP2C-D subfamily of type 2C phosphatases such as PP2C67/PP2C-D1, PP2C64/PP2C-D5 and PP2C46/PP2C-D6.

It localises to the cell membrane. Functionally, provide a mechanistic link between auxin and plasma membrane H(+)-ATPases (PM H(+)-ATPases, e.g. AHA1 and AHA2), and triggers PM H(+)-ATPases activity by promoting phosphorylation of their C-terminal autoinhibitory domain as a result of PP2C-D subfamily of type 2C phosphatases inhibition, thus leading to the acidification of the apoplast and the facilitation of solutes and water uptake to drive cell expansion. Prevents the apical hook maintenance of etiolated seedlings. Functions as positive effectors of cell expansion through modulation of auxin transport. This Arabidopsis thaliana (Mouse-ear cress) protein is Auxin-responsive protein SAUR19.